The primary structure comprises 267 residues: Auxin-responsive protein IAA18 (267 aa).

The short motif at 42 to 46 (LELKL) is the EAR-like (transcriptional repression) element. A disordered region spans residues 81–101 (PSSTKTTSHKRTAPGPVVGWP). Residues 149-248 (GMFVKINMYG…SVKRLRVIKT (100 aa)) form the PB1 domain.

Belongs to the Aux/IAA family. In terms of assembly, homodimers and heterodimers. Interacts with TPL.

Its subcellular location is the nucleus. In terms of biological role, aux/IAA proteins are short-lived transcriptional factors that function as repressors of early auxin response genes at low auxin concentrations. Repression is thought to result from the interaction with auxin response factors (ARFs), proteins that bind to the auxin-responsive promoter element (AuxRE). Formation of heterodimers with ARF proteins may alter their ability to modulate early auxin response genes expression. In Arabidopsis thaliana (Mouse-ear cress), this protein is Auxin-responsive protein IAA18 (IAA18).